Reading from the N-terminus, the 90-residue chain is Serine protease inhibitor kazal-like protein, minor form (90 aa).

The signal sequence occupies residues Met1–Ser23. The 57-residue stretch at Val33–Tyr89 folds into the Kazal-like domain. Asn38 carries N-linked (GlcNAc...) asparagine glycosylation.

As to expression, luminal fluid and mucosal folds of the seminal vesicles (at protein level). Not detected in brain, heart, lung, liver, kidney, stomach, small intestine, muscle, skin, thymus, placenta or bladder.

It localises to the secreted. Its function is as follows. Does not function as an inhibitor of trypsin, chymotrypsin, subtilisin or elastase. Binds sperm and enhances sperm motility. May act as a decapacitation factor, suppresses BSA-stimulated sperm capacitation and blocks sperm-oocyte interactions in vitro. This Mus musculus (Mouse) protein is Serine protease inhibitor kazal-like protein, minor form (Spinkl).